A 188-amino-acid polypeptide reads, in one-letter code: ATP synthase subunit delta (188 aa).

Belongs to the ATPase delta chain family. As to quaternary structure, F-type ATPases have 2 components, F(1) - the catalytic core - and F(0) - the membrane proton channel. F(1) has five subunits: alpha(3), beta(3), gamma(1), delta(1), epsilon(1). F(0) has three main subunits: a(1), b(2) and c(10-14). The alpha and beta chains form an alternating ring which encloses part of the gamma chain. F(1) is attached to F(0) by a central stalk formed by the gamma and epsilon chains, while a peripheral stalk is formed by the delta and b chains.

The protein resides in the cell inner membrane. Functionally, f(1)F(0) ATP synthase produces ATP from ADP in the presence of a proton or sodium gradient. F-type ATPases consist of two structural domains, F(1) containing the extramembraneous catalytic core and F(0) containing the membrane proton channel, linked together by a central stalk and a peripheral stalk. During catalysis, ATP synthesis in the catalytic domain of F(1) is coupled via a rotary mechanism of the central stalk subunits to proton translocation. Its function is as follows. This protein is part of the stalk that links CF(0) to CF(1). It either transmits conformational changes from CF(0) to CF(1) or is implicated in proton conduction. The polypeptide is ATP synthase subunit delta (Paracoccus denitrificans (strain Pd 1222)).